A 218-amino-acid polypeptide reads, in one-letter code: Lipoprotein-releasing system ATP-binding protein LolD (218 aa).

The ABC transporter domain maps to 2-218 (IKLEGITKSF…HMVDGTIKKD (217 aa)). 34-41 (GPSGAGKT) is an ATP binding site.

This sequence belongs to the ABC transporter superfamily. Lipoprotein translocase (TC 3.A.1.125) family. The complex is composed of two ATP-binding proteins (LolD) and two transmembrane proteins (LolC and LolE).

The protein resides in the cell inner membrane. Part of the ABC transporter complex LolCDE involved in the translocation of mature outer membrane-directed lipoproteins, from the inner membrane to the periplasmic chaperone, LolA. Responsible for the formation of the LolA-lipoprotein complex in an ATP-dependent manner. The sequence is that of Lipoprotein-releasing system ATP-binding protein LolD from Bacteroides thetaiotaomicron (strain ATCC 29148 / DSM 2079 / JCM 5827 / CCUG 10774 / NCTC 10582 / VPI-5482 / E50).